A 110-amino-acid polypeptide reads, in one-letter code: Large ribosomal subunit protein uL22 (110 aa).

This sequence belongs to the universal ribosomal protein uL22 family. As to quaternary structure, part of the 50S ribosomal subunit.

In terms of biological role, this protein binds specifically to 23S rRNA; its binding is stimulated by other ribosomal proteins, e.g. L4, L17, and L20. It is important during the early stages of 50S assembly. It makes multiple contacts with different domains of the 23S rRNA in the assembled 50S subunit and ribosome. Functionally, the globular domain of the protein is located near the polypeptide exit tunnel on the outside of the subunit, while an extended beta-hairpin is found that lines the wall of the exit tunnel in the center of the 70S ribosome. This Oleidesulfovibrio alaskensis (strain ATCC BAA-1058 / DSM 17464 / G20) (Desulfovibrio alaskensis) protein is Large ribosomal subunit protein uL22.